The following is a 263-amino-acid chain: Outer membrane lipoprotein 3 (263 aa).

A signal peptide spans M1–A19. C20 carries the N-palmitoyl cysteine lipid modification. A lipid anchor (S-diacylglycerol cysteine) is attached at C20.

Belongs to the NlpA lipoprotein family.

Its subcellular location is the cell outer membrane. This is Outer membrane lipoprotein 3 (plpC) from Mannheimia haemolytica (Pasteurella haemolytica).